Consider the following 229-residue polypeptide: Peptidyl-tRNA hydrolase (229 aa).

Tyr17 lines the tRNA pocket. His22 (proton acceptor) is an active-site residue. TRNA-binding residues include Phe74, Asn76, and Asn122. A disordered region spans residues 194–229 (AGKTTRPRKPVRQTANAEASNNSPEASATPQNKDNT). The segment covering 207 to 223 (TANAEASNNSPEASATP) has biased composition (low complexity).

It belongs to the PTH family. In terms of assembly, monomer.

It is found in the cytoplasm. It carries out the reaction an N-acyl-L-alpha-aminoacyl-tRNA + H2O = an N-acyl-L-amino acid + a tRNA + H(+). Hydrolyzes ribosome-free peptidyl-tRNAs (with 1 or more amino acids incorporated), which drop off the ribosome during protein synthesis, or as a result of ribosome stalling. In terms of biological role, catalyzes the release of premature peptidyl moieties from peptidyl-tRNA molecules trapped in stalled 50S ribosomal subunits, and thus maintains levels of free tRNAs and 50S ribosomes. The sequence is that of Peptidyl-tRNA hydrolase from Desulfovibrio desulfuricans (strain ATCC 27774 / DSM 6949 / MB).